The primary structure comprises 166 residues: Small ribosomal subunit protein uS5 (166 aa).

In terms of domain architecture, S5 DRBM spans 11-74 (LDDNVVAINR…EAAKKNLITV (64 aa)).

This sequence belongs to the universal ribosomal protein uS5 family. As to quaternary structure, part of the 30S ribosomal subunit. Contacts proteins S4 and S8.

Functionally, with S4 and S12 plays an important role in translational accuracy. Its function is as follows. Located at the back of the 30S subunit body where it stabilizes the conformation of the head with respect to the body. In Lactiplantibacillus plantarum (strain ATCC BAA-793 / NCIMB 8826 / WCFS1) (Lactobacillus plantarum), this protein is Small ribosomal subunit protein uS5.